The following is a 1344-amino-acid chain: Myb-binding protein 1A (1344 aa).

Residues 1 to 24 (MAEMKSPTKAEPASPAEAPQGDRR) form a disordered region. An N-acetylalanine modification is found at A2. The segment at 2-580 (AEMKSPTKAE…WDQMMSTLKE (579 aa)) is interaction with MYB. S14 is modified (phosphoserine). 2 positions are modified to N6-acetyllysine: K69 and K156. Short sequence motifs (nuclear export signal) lie at residues 238 to 256 (SEDN…ANSV) and 261 to 279 (KLPD…ENKF). 2 disordered regions span residues 696–752 (NEDE…DVDP) and 1150–1344 (PKSE…VQTP). Positions 708-730 (TDEKQLKHGEDADSDSEDSKNSE) are enriched in basic and acidic residues. Acidic residues predominate over residues 731 to 746 (SDVDSEDGEESEEEDR). Over residues 1150–1161 (PKSEKKNVKDIP) the composition is skewed to basic and acidic residues. Residue K1151 forms a Glycyl lysine isopeptide (Lys-Gly) (interchain with G-Cter in SUMO2) linkage. Residues 1154–1344 (KKNVKDIPSD…RVARRRVQTP (191 aa)) form a required for nuclear and nucleolar localization region. Phosphoserine is present on residues S1162 and S1166. Residues 1170-1187 (TKRKKKGFLPETKKRKKL) show a composition bias toward basic residues. S1189 carries the post-translational modification Phosphoserine. T1193 carries the post-translational modification Phosphothreonine. A phosphoserine mark is found at S1221 and S1246. Residues 1247–1256 (PAPNNPTLSP) show a composition bias toward low complexity. Phosphothreonine is present on T1253. A Phosphoserine modification is found at S1255. Phosphothreonine is present on residues T1258 and T1280. S1283, S1305, and S1318 each carry phosphoserine. Basic residues predominate over residues 1301–1316 (VKRRSSQSALPKKRAR). A compositionally biased stretch (low complexity) spans 1317–1329 (LSLVSRSPSLLQS). R1322 carries the citrulline modification. Phosphoserine is present on residues S1323, S1325, and S1329. Basic residues predominate over residues 1331-1344 (IRKRRVARRRVQTP).

It belongs to the MYBBP1A family. In terms of assembly, binds to and represses JUN and MYB via the leucine zipper regions present in these proteins. Also binds to and represses PPARGC1A: this interaction is abrogated when PPARGC1A is phosphorylated by MAPK1/ERK. Binds to and stimulates transcription by AHR. Binds to KPNA2. Component of the B-WICH complex, at least composed of SMARCA5/SNF2H, BAZ1B/WSTF, SF3B1, DEK, MYO1C, ERCC6, MYBBP1A and DDX21. Interacts with CLOCK and CRY1. Post-translationally, citrullinated by PADI4.

The protein localises to the nucleus. The protein resides in the nucleolus. Its subcellular location is the cytoplasm. Functionally, may activate or repress transcription via interactions with sequence specific DNA-binding proteins. Repression may be mediated at least in part by histone deacetylase activity (HDAC activity). Acts as a corepressor and in concert with CRY1, represses the transcription of the core circadian clock component PER2. Preferentially binds to dimethylated histone H3 'Lys-9' (H3K9me2) on the PER2 promoter. Has a role in rRNA biogenesis together with PWP1. This is Myb-binding protein 1A (Mybbp1a) from Rattus norvegicus (Rat).